Here is a 223-residue protein sequence, read N- to C-terminus: uncharacterized protein (223 aa).

Transmembrane regions (helical) follow at residues 1 to 21 (MLII…TFYL) and 45 to 65 (ILIG…TSLI).

The protein resides in the cell membrane. This is an uncharacterized protein from Haemophilus influenzae (strain ATCC 51907 / DSM 11121 / KW20 / Rd).